A 568-amino-acid chain; its full sequence is 2-succinyl-5-enolpyruvyl-6-hydroxy-3-cyclohexene-1-carboxylate synthase (568 aa).

Belongs to the TPP enzyme family. MenD subfamily. Homodimer. Mg(2+) is required as a cofactor. The cofactor is Mn(2+). Requires thiamine diphosphate as cofactor.

The enzyme catalyses isochorismate + 2-oxoglutarate + H(+) = 5-enolpyruvoyl-6-hydroxy-2-succinyl-cyclohex-3-ene-1-carboxylate + CO2. Its pathway is quinol/quinone metabolism; 1,4-dihydroxy-2-naphthoate biosynthesis; 1,4-dihydroxy-2-naphthoate from chorismate: step 2/7. It participates in quinol/quinone metabolism; menaquinone biosynthesis. Its function is as follows. Catalyzes the thiamine diphosphate-dependent decarboxylation of 2-oxoglutarate and the subsequent addition of the resulting succinic semialdehyde-thiamine pyrophosphate anion to isochorismate to yield 2-succinyl-5-enolpyruvyl-6-hydroxy-3-cyclohexene-1-carboxylate (SEPHCHC). The chain is 2-succinyl-5-enolpyruvyl-6-hydroxy-3-cyclohexene-1-carboxylate synthase from Histophilus somni (strain 129Pt) (Haemophilus somnus).